A 175-amino-acid polypeptide reads, in one-letter code: Ribosome-binding factor A (175 aa).

Positions 129–175 are disordered; it reads GAKPAGEADPYRDRGSADEPSDAGGLVIRTSDGLEAENTGDDYQAED. Acidic residues predominate over residues 162–175; it reads LEAENTGDDYQAED.

The protein belongs to the RbfA family. In terms of assembly, monomer. Binds 30S ribosomal subunits, but not 50S ribosomal subunits or 70S ribosomes.

Its subcellular location is the cytoplasm. One of several proteins that assist in the late maturation steps of the functional core of the 30S ribosomal subunit. Associates with free 30S ribosomal subunits (but not with 30S subunits that are part of 70S ribosomes or polysomes). Required for efficient processing of 16S rRNA. May interact with the 5'-terminal helix region of 16S rRNA. In Mycobacterium marinum (strain ATCC BAA-535 / M), this protein is Ribosome-binding factor A.